Reading from the N-terminus, the 749-residue chain is Protein lin-54 homolog (749 aa).

A Glycyl lysine isopeptide (Lys-Gly) (interchain with G-Cter in SUMO2) cross-link involves residue lysine 139. 2 positions are modified to N6-acetyllysine: lysine 244 and lysine 249. 4 positions are modified to phosphoserine: serine 264, serine 282, serine 310, and serine 314. Lysine 357 participates in a covalent cross-link: Glycyl lysine isopeptide (Lys-Gly) (interchain with G-Cter in SUMO2). A CRC domain is found at 521–634 (PRKPCNCTKS…KCIGCKNFEE (114 aa)). Positions 523 to 536 (KPCNCTKSLCLKLY) are DNA-binding. Positions 525, 527, 532, 537, 539, 546, 549, 551, and 554 each coordinate Zn(2+). Residues 583–596 (IGKGKEGESDRRHS) are linker. Positions 599, 601, 606, 611, 613, 620, 624, 626, and 629 each coordinate Zn(2+). Residues 599–612 (CNCKRSGCLKNYCE) are DNA-binding. Serine 635 bears the Phosphoserine mark. Residues lysine 639, lysine 659, and lysine 661 each participate in a glycyl lysine isopeptide (Lys-Gly) (interchain with G-Cter in SUMO2) cross-link.

Belongs to the lin-54 family. Component of the DREAM complex (also named LINC complex) at least composed of E2F4, E2F5, LIN9, LIN37, LIN52, LIN54, MYBL1, MYBL2, RBL1, RBL2, RBBP4, RBL2, TFDP1 and TFDP2. The complex exists in quiescent cells where it represses cell cycle-dependent genes. It dissociates in S phase when LIN9, LIN37, LIN52 and LIN54 form a subcomplex that binds to MYBL2.

The protein localises to the nucleus. In terms of biological role, component of the DREAM complex, a multiprotein complex that can both act as a transcription activator or repressor depending on the context. In G0 phase, the complex binds to more than 800 promoters and is required for repression of E2F target genes. In S phase, the complex selectively binds to the promoters of G2/M genes whose products are required for mitosis and participates in their cell cycle dependent activation. In the complex, acts as a DNA-binding protein that binds the promoter of CDK1 in a sequence-specific manner. Specifically recognizes the consensus motif 5'-TTYRAA-3' in target DNA. This chain is Protein lin-54 homolog (Lin54), found in Rattus norvegicus (Rat).